We begin with the raw amino-acid sequence, 330 residues long: Low affinity immunoglobulin gamma Fc region receptor II (330 aa).

A signal peptide spans 1–29; the sequence is MESNWTVHVFSRTLCHMLLWTAVLNLAAG. Topologically, residues 30-210 are extracellular; that stretch reads THDLPKAVVK…QGPKSSRSLP (181 aa). Ig-like C2-type domains lie at 50 to 106 and 131 to 189; these read EDTV…QTRL and GETI…LGRT. Disulfide bonds link C57–C99 and C138–C182. 4 N-linked (GlcNAc...) asparagine glycosylation sites follow: N65, N92, N166, and N173. A helical membrane pass occupies residues 211–231; sequence VLTIVAAVTGIAVAAIVIILV. Residues 232–330 are Cytoplasmic-facing; sequence SLVYLKKKQV…ETEHDYQNHI (99 aa). The disordered stretch occupies residues 261–330; sequence VGEYRQPSGG…ETEHDYQNHI (70 aa). The residue at position 290 (Y290) is a Phosphotyrosine. The ITIM motif signature appears at 307 to 312; sequence ITYSLL. Y309 is modified (phosphotyrosine; by SRC-type Tyr-kinases). Residue Y326 is modified to Phosphotyrosine.

Interacts with FGR. Interacts with LYN. Glycosylated. In terms of processing, when coaggregated to BCR, isoform IIB1 and isoform IIB1' become tyrosine phosphorylated and bind to the SH2 domains of the protein tyrosine phosphatase PTPC1. Phosphorylated by SRC-type Tyr-kinases such as LYN, BLK, FYN and SYK. As to expression, widely expressed by cells of hemopoietic origin. The isoforms are differentially expressed. Isoform IIB1 is preferentially expressed by cells of the lymphoid lineage, isoform IIB2 by cells of the myeloid lineage, and isoform IIB3 is released by macrophages and is present in the serum. Isoform IIB1' is expressed in myeloid and lymphoid cell lines, in normal spleen cells, and in resting or LPS-activated B-cells but is not detected in mesenteric lymph node cells.

The protein localises to the cell membrane. It is found in the cytoplasm. Its subcellular location is the cytoskeleton. The protein resides in the secreted. Its function is as follows. Receptor for the Fc region of complexed immunoglobulins gamma. Low affinity receptor. Involved in a variety of effector and regulatory functions such as phagocytosis of antigen-antibody complexes from the circulation and modulation of antibody production by B-cells. Isoform IIB1 and isoform IIB1' form caps but fail to mediate endocytosis or phagocytosis. Isoform IIB2 can mediate the endocytosis of soluble immune complexes via clathrin-coated pits. Isoform IIB1 and isoform IIB2 can down-regulate B-cell, T-cell, and mast cell activation when coaggregated to B-cell receptors for AG (BCR), T-cell receptors for AG (TCR), and Fc receptors, respectively. This is Low affinity immunoglobulin gamma Fc region receptor II (Fcgr2) from Mus musculus (Mouse).